The following is a 131-amino-acid chain: Small ribosomal subunit protein uS11 (131 aa).

It belongs to the universal ribosomal protein uS11 family. In terms of assembly, part of the 30S ribosomal subunit. Interacts with proteins S7 and S18. Binds to IF-3.

Its function is as follows. Located on the platform of the 30S subunit, it bridges several disparate RNA helices of the 16S rRNA. Forms part of the Shine-Dalgarno cleft in the 70S ribosome. In Geobacter sulfurreducens (strain ATCC 51573 / DSM 12127 / PCA), this protein is Small ribosomal subunit protein uS11.